The following is a 113-amino-acid chain: Small ribosomal subunit protein bS6 (113 aa).

The protein belongs to the bacterial ribosomal protein bS6 family.

Functionally, binds together with bS18 to 16S ribosomal RNA. The chain is Small ribosomal subunit protein bS6 from Ruthia magnifica subsp. Calyptogena magnifica.